The following is a 379-amino-acid chain: Chaperone protein DnaJ (379 aa).

The J domain maps to 5 to 70; the sequence is DYYEVLGLSK…EKKAMYDQYG (66 aa). The CR-type zinc finger occupies 136 to 214; the sequence is GCKKDIRIHT…CHGDGRVHKA (79 aa). 8 residues coordinate Zn(2+): C149, C152, C166, C169, C188, C191, C202, and C205. CXXCXGXG motif repeat units follow at residues 149-156, 166-173, 188-195, and 202-209; these read CDTCHGTG, CSHCHGSG, CPSCHGTG, and CRSCHGDG.

Belongs to the DnaJ family. As to quaternary structure, homodimer. It depends on Zn(2+) as a cofactor.

The protein resides in the cytoplasm. Participates actively in the response to hyperosmotic and heat shock by preventing the aggregation of stress-denatured proteins and by disaggregating proteins, also in an autonomous, DnaK-independent fashion. Unfolded proteins bind initially to DnaJ; upon interaction with the DnaJ-bound protein, DnaK hydrolyzes its bound ATP, resulting in the formation of a stable complex. GrpE releases ADP from DnaK; ATP binding to DnaK triggers the release of the substrate protein, thus completing the reaction cycle. Several rounds of ATP-dependent interactions between DnaJ, DnaK and GrpE are required for fully efficient folding. Also involved, together with DnaK and GrpE, in the DNA replication of plasmids through activation of initiation proteins. In Mannheimia haemolytica (Pasteurella haemolytica), this protein is Chaperone protein DnaJ.